The chain runs to 450 residues: Ribosomal protein uS12 methylthiotransferase RimO (450 aa).

One can recognise an MTTase N-terminal domain in the interval 7-123 (QKVSMVSLGC…IAEILAEKSG (117 aa)). [4Fe-4S] cluster is bound by residues C16, C52, C86, C161, C165, and C168. Positions 147–377 (SSPAWFSYLK…MRIQARLSFK (231 aa)) constitute a Radical SAM core domain. In terms of domain architecture, TRAM spans 380–448 (RELIGTTEQV…DYDLIGEIQE (69 aa)).

It belongs to the methylthiotransferase family. RimO subfamily. [4Fe-4S] cluster is required as a cofactor.

The protein resides in the cytoplasm. It carries out the reaction L-aspartate(89)-[ribosomal protein uS12]-hydrogen + (sulfur carrier)-SH + AH2 + 2 S-adenosyl-L-methionine = 3-methylsulfanyl-L-aspartate(89)-[ribosomal protein uS12]-hydrogen + (sulfur carrier)-H + 5'-deoxyadenosine + L-methionine + A + S-adenosyl-L-homocysteine + 2 H(+). Its function is as follows. Catalyzes the methylthiolation of an aspartic acid residue of ribosomal protein uS12. The chain is Ribosomal protein uS12 methylthiotransferase RimO from Pelobacter propionicus (strain DSM 2379 / NBRC 103807 / OttBd1).